The following is a 349-amino-acid chain: 1-acylglycerol-3-phosphate O-acyltransferase ABHD5 (349 aa).

A2 carries the post-translational modification N-acetylalanine. In terms of domain architecture, AB hydrolase-1 spans 77–184 (PLVLLHGFGG…LVEPWGFPER (108 aa)). S122 bears the Phosphoserine mark. The short motif at 327 to 332 (HYVYAD) is the HXXXXD motif element.

This sequence belongs to the peptidase S33 family. ABHD4/ABHD5 subfamily. In terms of assembly, interacts with ADRP, PLIN and PNPLA2. Interacts with PLIN5; promotes interaction with PNPLA2.

Its subcellular location is the cytoplasm. The protein localises to the lipid droplet. The enzyme catalyses a 1-acyl-sn-glycero-3-phosphate + an acyl-CoA = a 1,2-diacyl-sn-glycero-3-phosphate + CoA. It catalyses the reaction 1-(9Z-octadecenoyl)-sn-glycero-3-phosphate + (9Z)-octadecenoyl-CoA = 1,2-di-(9Z-octadecenoyl)-sn-glycero-3-phosphate + CoA. It carries out the reaction 1-(9Z-octadecenoyl)-sn-glycero-3-phosphate + hexadecanoyl-CoA = 1-(9Z)-octadecenoyl-2-hexadecanoyl-sn-glycero-3-phosphate + CoA. The catalysed reaction is 1-(9Z-octadecenoyl)-sn-glycero-3-phosphate + octadecanoyl-CoA = 1-(9Z-octadecenoyl)-2-octadecanoyl-sn-glycero-3-phosphate + CoA. The enzyme catalyses 1-(9Z-octadecenoyl)-sn-glycero-3-phosphate + (5Z,8Z,11Z,14Z)-eicosatetraenoyl-CoA = 1-(9Z)-octadecenoyl-2-(5Z,8Z,11Z,14Z)-eicosatetraenoyl-sn-glycero-3-phosphate + CoA. It catalyses the reaction eicosanoyl-CoA + 1-(9Z-octadecenoyl)-sn-glycero-3-phosphate = 1-(9Z)-octadecenoyl-2-eicosanoyl-sn-glycero-3-phosphate + CoA. It carries out the reaction 1-hexadecanoyl-sn-glycero-3-phosphate + (9Z)-octadecenoyl-CoA = 1-hexadecanoyl-2-(9Z-octadecenoyl)-sn-glycero-3-phosphate + CoA. The catalysed reaction is 1-octadecanoyl-sn-glycero-3-phosphate + (9Z)-octadecenoyl-CoA = 1-octadecanoyl-2-(9Z-octadecenoyl)-sn-glycero-3-phosphate + CoA. The enzyme catalyses 1-(5Z,8Z,11Z,14Z-eicosatetraenoyl)-sn-glycero-3-phosphate + (9Z)-octadecenoyl-CoA = 1-(5Z,8Z,11Z,14Z)-eicosatetraenoyl-2-(9Z)-octadecenoyl-sn-glycero-3-phosphate + CoA. Its activity is regulated as follows. Acyltransferase activity is inhibited by detergents such as Triton X-100 and 3-[(3-cholamidopropyl)dimethylammonio]-1-propanesulfonate (CHAPS). Acyltransferase activity is inhibited by the presence of magnesium and calcium. In terms of biological role, coenzyme A-dependent lysophosphatidic acid acyltransferase that catalyzes the transfer of an acyl group on a lysophosphatidic acid. Functions preferentially with 1-oleoyl-lysophosphatidic acid followed by 1-palmitoyl-lysophosphatidic acid, 1-stearoyl-lysophosphatidic acid and 1-arachidonoyl-lysophosphatidic acid as lipid acceptor. Functions preferentially with arachidonoyl-CoA followed by oleoyl-CoA as acyl group donors. Functions in phosphatidic acid biosynthesis. May regulate the cellular storage of triacylglycerol through activation of the phospholipase PNPLA2. Involved in keratinocyte differentiation. Regulates lipid droplet fusion. This Pongo abelii (Sumatran orangutan) protein is 1-acylglycerol-3-phosphate O-acyltransferase ABHD5.